A 169-amino-acid polypeptide reads, in one-letter code: Nucleoside diphosphate kinase 3-A (169 aa).

6 residues coordinate ADP: Lys29, Arg105, Thr111, Arg122, Val129, and Asn132. Residue His135 is the Pros-phosphohistidine intermediate of the active site.

The protein belongs to the NDK family. As to quaternary structure, homohexamer. It depends on Mg(2+) as a cofactor.

Its subcellular location is the mitochondrion outer membrane. The protein resides in the cytoplasm. It localises to the cytoskeleton. It is found in the cilium basal body. It catalyses the reaction a 2'-deoxyribonucleoside 5'-diphosphate + ATP = a 2'-deoxyribonucleoside 5'-triphosphate + ADP. The catalysed reaction is a ribonucleoside 5'-diphosphate + ATP = a ribonucleoside 5'-triphosphate + ADP. In terms of biological role, catalyzes the phosphorylation of ribonucleosides and deoxyribonucleoside diphosphates, other than ATP, into the corresponding triphosphates with ATP as the major phosphate donor. The ATP gamma phosphate is transferred to the nucleoside diphosphate beta phosphate via a ping-pong mechanism, using a phosphorylated active-site intermediate. Through the catalyzed exchange of gamma-phosphate between di- and triphosphonucleosides participates in regulation of intracellular nucleotide homeostasis. Required for ciliary function during renal development. Its function is as follows. Independently of its kinase activity, facilitates mitochondrial tethering prior to membrane fusion through its direct membrane-binding and hexamerization. Implicated in repair of both single- and double-stranded breaks in DNA, independently of its kinase activity. The protein is Nucleoside diphosphate kinase 3-A of Xenopus laevis (African clawed frog).